The sequence spans 179 residues: uncharacterized protein (179 aa).

This is an uncharacterized protein from Mushroom bacilliform virus (isolate Australia/AUS LF-1) (MBV).